The sequence spans 116 residues: uncharacterized protein (116 aa).

The interval valine 76–asparagine 116 is disordered. The span at arginine 85 to asparagine 99 shows a compositional bias: low complexity.

This is an uncharacterized protein from Glycine max (Soybean).